The primary structure comprises 278 residues: 4-deoxy-L-threo-5-hexosulose-uronate ketol-isomerase (278 aa).

Zn(2+) is bound by residues His196, His198, Glu203, and His245.

It belongs to the KduI family. As to quaternary structure, homohexamer. Zn(2+) serves as cofactor.

The catalysed reaction is 5-dehydro-4-deoxy-D-glucuronate = 3-deoxy-D-glycero-2,5-hexodiulosonate. The protein operates within glycan metabolism; pectin degradation; 2-dehydro-3-deoxy-D-gluconate from pectin: step 4/5. Its function is as follows. Catalyzes the isomerization of 5-dehydro-4-deoxy-D-glucuronate to 3-deoxy-D-glycero-2,5-hexodiulosonate. The chain is 4-deoxy-L-threo-5-hexosulose-uronate ketol-isomerase from Escherichia coli O139:H28 (strain E24377A / ETEC).